A 159-amino-acid polypeptide reads, in one-letter code: 6,7-dimethyl-8-ribityllumazine synthase (159 aa).

Residues tryptophan 26, alanine 57–glutamate 59, and cysteine 79–isoleucine 81 contribute to the 5-amino-6-(D-ribitylamino)uracil site. Glycine 84 to threonine 85 contacts (2S)-2-hydroxy-3-oxobutyl phosphate. Histidine 87 serves as the catalytic Proton donor. Asparagine 112 serves as a coordination point for 5-amino-6-(D-ribitylamino)uracil. Arginine 126 contributes to the (2S)-2-hydroxy-3-oxobutyl phosphate binding site.

Belongs to the DMRL synthase family.

The enzyme catalyses (2S)-2-hydroxy-3-oxobutyl phosphate + 5-amino-6-(D-ribitylamino)uracil = 6,7-dimethyl-8-(1-D-ribityl)lumazine + phosphate + 2 H2O + H(+). Its pathway is cofactor biosynthesis; riboflavin biosynthesis; riboflavin from 2-hydroxy-3-oxobutyl phosphate and 5-amino-6-(D-ribitylamino)uracil: step 1/2. Its function is as follows. Catalyzes the formation of 6,7-dimethyl-8-ribityllumazine by condensation of 5-amino-6-(D-ribitylamino)uracil with 3,4-dihydroxy-2-butanone 4-phosphate. This is the penultimate step in the biosynthesis of riboflavin. The chain is 6,7-dimethyl-8-ribityllumazine synthase from Corynebacterium efficiens (strain DSM 44549 / YS-314 / AJ 12310 / JCM 11189 / NBRC 100395).